Reading from the N-terminus, the 236-residue chain is Carboxymethylenebutenolidase (236 aa).

Active-site residues include cysteine 123, aspartate 171, and histidine 202.

The protein belongs to the dienelactone hydrolase family. Monomer.

It catalyses the reaction 2-(5-oxo-2,5-dihydrofuran-2-ylidene)acetate + H2O = 4-oxohex-2-enedioate + H(+). Its pathway is aromatic compound metabolism; 3-chlorocatechol degradation. In terms of biological role, ring cleavage of cyclic ester dienelactone to produce maleylacetate. In Pseudomonas knackmussii (strain DSM 6978 / CCUG 54928 / LMG 23759 / B13), this protein is Carboxymethylenebutenolidase (clcD).